Reading from the N-terminus, the 443-residue chain is Xaa-Pro dipeptidase (443 aa).

Mn(2+)-binding residues include Asp244, Asp255, His336, Glu381, and Glu420.

Belongs to the peptidase M24B family. Bacterial-type prolidase subfamily. Requires Mn(2+) as cofactor.

The enzyme catalyses Xaa-L-Pro dipeptide + H2O = an L-alpha-amino acid + L-proline. Splits dipeptides with a prolyl residue in the C-terminal position. The polypeptide is Xaa-Pro dipeptidase (Stenotrophomonas maltophilia (strain R551-3)).